The following is a 208-amino-acid chain: LexA repressor (208 aa).

The H-T-H motif DNA-binding region spans 29 to 49 (IREIGDSLNINSTSTVHNNIL). Active-site for autocatalytic cleavage activity residues include Ser131 and Lys168.

This sequence belongs to the peptidase S24 family. Homodimer.

The enzyme catalyses Hydrolysis of Ala-|-Gly bond in repressor LexA.. Functionally, represses a number of genes involved in the response to DNA damage (SOS response), including recA and lexA. In the presence of single-stranded DNA, RecA interacts with LexA causing an autocatalytic cleavage which disrupts the DNA-binding part of LexA, leading to derepression of the SOS regulon and eventually DNA repair. The sequence is that of LexA repressor from Finegoldia magna (strain ATCC 29328 / DSM 20472 / WAL 2508) (Peptostreptococcus magnus).